Reading from the N-terminus, the 493-residue chain is MQPAGLEGPRALGLRPLGHRLSLLGVLLLVPSLWVTCTLTTPSPSSAPTTPEASNATTAPGIPNDTATSGVTSDPRLREQALALMRDFPLVDGHNDLPLLLRELFQNQLQDVNLRNFTRGQTNLDRLRDGLVGAQFWSAYIPCQTQDRDAVRLALEQIDLIRRMCSAYPELELVTSADGLNNTQKLACLIGVEGGHSLDTSLAVLRSFYELGVRYLTLTFTCSTPWAESATKFRHHFYTNISGLTSFGEKVVEEMNRLGMMIDLSHASDTLVKQTLEVSQAPVIFSHSAARSVCDNLLNIPDDILQLLKKNGGIVMVTLSMGVLQCSLFANVSTVADHFDHIRTVIGSEFIGIGGSYDGSGRFPQGLEDVSTYPVLIEELLSRGWDERELQGVLRGNLLRVFRQVEQVREKSLGQSPVEVKFPERQQSNTCHSHLLPQPQEDQHQDTHLKVTKLPNILQRASKAPPHPLPGLMATLTSLALILWLCCSGHRAV.

The N-terminal stretch at 1–35 is a signal peptide; it reads MQPAGLEGPRALGLRPLGHRLSLLGVLLLVPSLWV. Positions 41–60 are enriched in low complexity; sequence TPSPSSAPTTPEASNATTAP. The tract at residues 41 to 74 is disordered; the sequence is TPSPSSAPTTPEASNATTAPGIPNDTATSGVTSD. Intrachain disulfides connect C143–C222 and C294–C326. N-linked (GlcNAc...) asparagine glycosylation occurs at N331. A lipid anchor (GPI-anchor amidated serine) is attached at S462. A propeptide spans 463–493 (removed in mature form); the sequence is KAPPHPLPGLMATLTSLALILWLCCSGHRAV.

The protein belongs to the metallo-dependent hydrolases superfamily. Peptidase M19 family. Homodimer; disulfide-linked. Interacts with TEX101; co-localized on the cell surface of spermatocytes, spermatids, and testicular spermatozoa, co-localized only in cytoplasmic droplets of caput and corpus epididymal sperm. In terms of tissue distribution, expressed in testis but not ovary.

Its subcellular location is the membrane. Its function is as follows. Lacks dipeptidase activity and is unable to hydrolyze cystinyl-bis-glycine. The absence of activity may be due to the inability of serine (instead of aspartate found in DPEP1/2) at position 356 to function as the acid/base catalyst and activate the nucleophilic water/hydroxide. Does not hydrolyze leukotriene D4 (LTD4) into leukotriene E4 (LTE4). Does not hydrolyze the beta-lactam antibiotic imipenem. The chain is Dipeptidase 3 (Dpep3) from Mus musculus (Mouse).